Consider the following 376-residue polypeptide: MARVEL domain-containing protein 3 (376 aa).

Over residues 1–95 the composition is skewed to basic and acidic residues; the sequence is MKNTSGHREP…EKSRQSRARP (95 aa). The segment at 1-134 is disordered; sequence MKNTSGHREP…GRRGLESERA (134 aa). Topologically, residues 1–173 are cytoplasmic; that stretch reads MKNTSGHREP…HKCRYLCTGR (173 aa). The region spanning 168–361 is the MARVEL domain; it reads YLCTGRACWQ…GAVLAFRGYR (194 aa). Residues 174-194 form a helical membrane-spanning segment; that stretch reads ACWQMLKALLNLLILACSSVS. Residues 195-247 are Extracellular-facing; sequence YNSTGGYTGITSLGGIYYYQYGGAYSGFDGADGERAQQLDVQFYQLKLPTVTA. Residues 248–268 traverse the membrane as a helical segment; sequence AMAYSGALMTFSCLTLLAGAL. Over 269-275 the chain is Cytoplasmic; it reads RVPWHCP. The chain crosses the membrane as a helical span at residues 276 to 296; sequence LWLVIEGLMDALIAGAYVPGL. The Extracellular segment spans residues 297 to 335; it reads YFFFQHLSAAYSSDVCKERETLYQSKGYSGFNCGVHGGD. A helical transmembrane segment spans residues 336–356; the sequence is IGAGVFAAMAIGVFAVGAVLA. Residues 357-376 lie on the Cytoplasmic side of the membrane; sequence FRGYRKVKKLKEKPTEMLEF.

Widely expressed with highest levels in small intestine, colon, stomach and lung. Liver expresses only isoform 2.

Its subcellular location is the membrane. The protein resides in the cell junction. It localises to the tight junction. Its function is as follows. As a component of tight junctions, plays a role in paracellular ion conductivity. The polypeptide is MARVEL domain-containing protein 3 (Marveld3) (Mus musculus (Mouse)).